The sequence spans 488 residues: Lysine--tRNA ligase (488 aa).

2 residues coordinate Mg(2+): Glu-398 and Glu-405.

It belongs to the class-II aminoacyl-tRNA synthetase family. As to quaternary structure, homodimer. Requires Mg(2+) as cofactor.

The protein resides in the cytoplasm. The catalysed reaction is tRNA(Lys) + L-lysine + ATP = L-lysyl-tRNA(Lys) + AMP + diphosphate. This Carboxydothermus hydrogenoformans (strain ATCC BAA-161 / DSM 6008 / Z-2901) protein is Lysine--tRNA ligase.